An 89-amino-acid polypeptide reads, in one-letter code: Small ribosomal subunit protein uS15 (89 aa).

The protein belongs to the universal ribosomal protein uS15 family. In terms of assembly, part of the 30S ribosomal subunit. Forms a bridge to the 50S subunit in the 70S ribosome, contacting the 23S rRNA.

Its function is as follows. One of the primary rRNA binding proteins, it binds directly to 16S rRNA where it helps nucleate assembly of the platform of the 30S subunit by binding and bridging several RNA helices of the 16S rRNA. Functionally, forms an intersubunit bridge (bridge B4) with the 23S rRNA of the 50S subunit in the ribosome. The sequence is that of Small ribosomal subunit protein uS15 from Streptococcus suis (strain 98HAH33).